Here is a 572-residue protein sequence, read N- to C-terminus: Dihydroxy-acid dehydratase (572 aa).

C54 is a binding site for [2Fe-2S] cluster. Residue D86 coordinates Mg(2+). C127 is a [2Fe-2S] cluster binding site. 2 residues coordinate Mg(2+): D128 and K129. N6-carboxylysine is present on K129. Residue C199 coordinates [2Fe-2S] cluster. Residue E449 participates in Mg(2+) binding. S475 serves as the catalytic Proton acceptor.

This sequence belongs to the IlvD/Edd family. As to quaternary structure, homodimer. It depends on [2Fe-2S] cluster as a cofactor. Mg(2+) is required as a cofactor.

It catalyses the reaction (2R)-2,3-dihydroxy-3-methylbutanoate = 3-methyl-2-oxobutanoate + H2O. The enzyme catalyses (2R,3R)-2,3-dihydroxy-3-methylpentanoate = (S)-3-methyl-2-oxopentanoate + H2O. It functions in the pathway amino-acid biosynthesis; L-isoleucine biosynthesis; L-isoleucine from 2-oxobutanoate: step 3/4. Its pathway is amino-acid biosynthesis; L-valine biosynthesis; L-valine from pyruvate: step 3/4. Functionally, functions in the biosynthesis of branched-chain amino acids. Catalyzes the dehydration of (2R,3R)-2,3-dihydroxy-3-methylpentanoate (2,3-dihydroxy-3-methylvalerate) into 2-oxo-3-methylpentanoate (2-oxo-3-methylvalerate) and of (2R)-2,3-dihydroxy-3-methylbutanoate (2,3-dihydroxyisovalerate) into 2-oxo-3-methylbutanoate (2-oxoisovalerate), the penultimate precursor to L-isoleucine and L-valine, respectively. The chain is Dihydroxy-acid dehydratase from Pelagibacter ubique (strain HTCC1062).